Consider the following 178-residue polypeptide: ATP-dependent protease subunit HslV (178 aa).

T7 is a catalytic residue. Na(+)-binding residues include G162, C165, and T168.

It belongs to the peptidase T1B family. HslV subfamily. A double ring-shaped homohexamer of HslV is capped on each side by a ring-shaped HslU homohexamer. The assembly of the HslU/HslV complex is dependent on binding of ATP.

The protein localises to the cytoplasm. It carries out the reaction ATP-dependent cleavage of peptide bonds with broad specificity.. Its activity is regulated as follows. Allosterically activated by HslU binding. Protease subunit of a proteasome-like degradation complex believed to be a general protein degrading machinery. This chain is ATP-dependent protease subunit HslV, found in Dechloromonas aromatica (strain RCB).